Here is a 307-residue protein sequence, read N- to C-terminus: MLRWARAWRVPRGVLGASSPRRLAVPVTFCSSRSSGQENADLRPLPLSYNLLDGDATLPAIVFLHGLFGSKTNFNSLAKAMVQRTGRRVLTVDARNHGDSPHSPDASYEAMSQDLQGLLPQLGLVPCVLVGHSMGGKTAMLLALQRPDVVERLVVVDISPVGTTPGSHIGAFIAAMKAVEIPEKVPHSQARKLADKQLSSVVKEAGIRQFLLTNLVEVGGRFSWRLNLDTLAQHLDKIMTFPQQREPYSGPTLFLLGGNSTYVQPSHHSEIRRLFPQAQIQTVPNAGHWVHSDKPQDFMDAVTSFLA.

A mitochondrion-targeting transit peptide spans 1 to 34 (MLRWARAWRVPRGVLGASSPRRLAVPVTFCSSRS). Lys-79 carries the post-translational modification N6-succinyllysine. The active-site Charge relay system is the Ser-133. The residue at position 196 (Lys-196) is an N6-succinyllysine. Active-site charge relay system residues include Asp-229 and His-288.

Belongs to the AB hydrolase superfamily. In terms of assembly, interacts with OGDH and DLST; this interaction maintains the functional lipoylation of the 2-oxoglutarate dehydrogenase complex. Phosphorylated. Expressed in white adipose tissues.

The protein resides in the mitochondrion. It localises to the mitochondrion matrix. It catalyses the reaction 1-octadecanoyl-2-(5Z,8Z,11Z,14Z-eicosatetraenoyl)-sn-glycerol + H2O = 2-(5Z,8Z,11Z,14Z-eicosatetraenoyl)-glycerol + octadecanoate + H(+). It carries out the reaction a 1,2-diacyl-sn-glycerol + H2O = a 2-acylglycerol + a fatty acid + H(+). The catalysed reaction is a 1,3-diacyl-sn-glycerol + H2O = a 1-acyl-sn-glycerol + a fatty acid + H(+). The enzyme catalyses 1-octadecanoyl-2-(9Z-octadecenoyl)-sn-glycerol + H2O = 2-(9Z-octadecenoyl)-glycerol + octadecanoate + H(+). It catalyses the reaction 1-octadecanoyl-2-(4Z,7Z,10Z,13Z,16Z,19Z-docosahexaenoyl)-sn-glycerol + H2O = 2-(4Z,7Z,10Z,13Z,16Z,19Z-docosahexaenoyl)-glycerol + octadecanoate + H(+). It carries out the reaction 1,2-didecanoylglycerol + H2O = decanoylglycerol + decanoate + H(+). Its function is as follows. Catalyzes the hydrolysis of diacylglycerol in vitro and may function as a key regulator in lipid metabolism, namely by regulating the intracellular levels of diacylglycerol. 1,2-diacyl-sn-glycerols are the preferred substrate over 1,3-diacyl-sn-glycerols. The enzyme hydrolyzes stearate in preference to palmitate from the sn-1 position of 1,2-diacyl-sn-glycerols. Maintains the functional lipoylation of the 2-oxoglutarate dehydrogenase complex (OGDHc) through its interaction with the OGDHc by preventing the formation of lipoyl adducts. In addition, is also required for the expansion and differentiation of embryonic stem cells (ESCs). In Mus musculus (Mouse), this protein is sn-1-specific diacylglycerol lipase ABHD11.